The sequence spans 212 residues: Penicillin-binding protein activator LpoB (212 aa).

Residues 1 to 19 (MTKMHRYAAIAALAIFLSG) form the signal peptide. Cys20 is lipidated: N-palmitoyl cysteine. The S-diacylglycerol cysteine moiety is linked to residue Cys20. Residues 28 to 73 (PVEEVKPAPEQPAQPPQPPVVPSVPTIPQQPGPIEHEDQTGQPAPK) form a disordered region. Positions 36–49 (PEQPAQPPQPPVVP) are enriched in pro residues.

It belongs to the LpoB family. As to quaternary structure, interacts with PBP1b.

It is found in the cell outer membrane. Regulator of peptidoglycan synthesis that is essential for the function of penicillin-binding protein 1B (PBP1b). This Salmonella typhimurium (strain LT2 / SGSC1412 / ATCC 700720) protein is Penicillin-binding protein activator LpoB.